We begin with the raw amino-acid sequence, 206 residues long: Ribosomal RNA small subunit methyltransferase G (206 aa).

S-adenosyl-L-methionine-binding positions include glycine 74, leucine 79, 125 to 126 (VE), and arginine 140.

This sequence belongs to the methyltransferase superfamily. RNA methyltransferase RsmG family.

It localises to the cytoplasm. The enzyme catalyses guanosine(527) in 16S rRNA + S-adenosyl-L-methionine = N(7)-methylguanosine(527) in 16S rRNA + S-adenosyl-L-homocysteine. In terms of biological role, specifically methylates the N7 position of guanine in position 527 of 16S rRNA. This Shewanella frigidimarina (strain NCIMB 400) protein is Ribosomal RNA small subunit methyltransferase G.